The sequence spans 89 residues: Small ribosomal subunit protein uS14A (89 aa).

This sequence belongs to the universal ribosomal protein uS14 family. Part of the 30S ribosomal subunit. Contacts proteins S3 and S10.

In terms of biological role, binds 16S rRNA, required for the assembly of 30S particles and may also be responsible for determining the conformation of the 16S rRNA at the A site. The polypeptide is Small ribosomal subunit protein uS14A (Bacillus pumilus (strain SAFR-032)).